Reading from the N-terminus, the 179-residue chain is D-glycero-beta-D-manno-heptose-1,7-bisphosphate 7-phosphatase (179 aa).

The active-site Nucleophile is the aspartate 7. Mg(2+) is bound by residues aspartate 7 and aspartate 9. Aspartate 7 is a binding site for substrate. The active-site Proton donor is aspartate 9. Residues 15-19, 50-53, and arginine 57 contribute to the substrate site; these read DSDAF and TNQS. Residues cysteine 89, histidine 91, cysteine 97, and cysteine 99 each coordinate Zn(2+). Arginine 100 provides a ligand contact to substrate. Aspartate 126 provides a ligand contact to Mg(2+). Arginine 129 is a substrate binding site.

As to quaternary structure, monomer. Requires Mg(2+) as cofactor. The cofactor is Zn(2+).

The protein resides in the cytoplasm. The catalysed reaction is D-glycero-beta-D-manno-heptose 1,7-bisphosphate + H2O = D-glycero-beta-D-manno-heptose 1-phosphate + phosphate. Its pathway is nucleotide-sugar biosynthesis; ADP-L-glycero-beta-D-manno-heptose biosynthesis; ADP-L-glycero-beta-D-manno-heptose from D-glycero-beta-D-manno-heptose 7-phosphate: step 2/4. The protein operates within bacterial outer membrane biogenesis; LPS core biosynthesis. Functionally, converts the D-glycero-beta-D-manno-heptose 1,7-bisphosphate (beta-HBP) intermediate into D-glycero-beta-D-manno-heptose 1-phosphate by removing the phosphate group at the C-7 position. This chain is D-glycero-beta-D-manno-heptose-1,7-bisphosphate 7-phosphatase, found in Bordetella bronchiseptica (strain ATCC BAA-588 / NCTC 13252 / RB50) (Alcaligenes bronchisepticus).